The following is a 73-amino-acid chain: Translation initiation factor IF-1 (73 aa).

One can recognise an S1-like domain in the interval methionine 1 to lysine 73.

Belongs to the IF-1 family. Component of the 30S ribosomal translation pre-initiation complex which assembles on the 30S ribosome in the order IF-2 and IF-3, IF-1 and N-formylmethionyl-tRNA(fMet); mRNA recruitment can occur at any time during PIC assembly.

Its subcellular location is the cytoplasm. Functionally, one of the essential components for the initiation of protein synthesis. Stabilizes the binding of IF-2 and IF-3 on the 30S subunit to which N-formylmethionyl-tRNA(fMet) subsequently binds. Helps modulate mRNA selection, yielding the 30S pre-initiation complex (PIC). Upon addition of the 50S ribosomal subunit IF-1, IF-2 and IF-3 are released leaving the mature 70S translation initiation complex. This Anaeromyxobacter sp. (strain Fw109-5) protein is Translation initiation factor IF-1.